Consider the following 193-residue polypeptide: Peptidyl-tRNA hydrolase 1 (193 aa).

Tyrosine 27 is a binding site for tRNA. Residue histidine 32 is the Proton acceptor of the active site. TRNA is bound by residues phenylalanine 80, asparagine 82, and asparagine 128.

This sequence belongs to the PTH family. As to quaternary structure, monomer.

The protein resides in the cytoplasm. It carries out the reaction an N-acyl-L-alpha-aminoacyl-tRNA + H2O = an N-acyl-L-amino acid + a tRNA + H(+). In terms of biological role, hydrolyzes ribosome-free peptidyl-tRNAs (with 1 or more amino acids incorporated), which drop off the ribosome during protein synthesis, or as a result of ribosome stalling. Its function is as follows. Catalyzes the release of premature peptidyl moieties from peptidyl-tRNA molecules trapped in stalled 50S ribosomal subunits, and thus maintains levels of free tRNAs and 50S ribosomes. This Corynebacterium jeikeium (strain K411) protein is Peptidyl-tRNA hydrolase 1.